Consider the following 556-residue polypeptide: MARKGNPISVRLGKNRSSDSSWFSDYYYGKFVYQDVNLRSYFGSIRPPTRLTFGFRLGRCIILHFPKRTFIHFFLPRRPRRLKRREKTRPGKEKGRWWTTFGKAGPIECLHSSDDTEEERNEVRGRGARKRVESIRLDDRKKQNEIRGWPKKKQRYGYHDRLPSIKKNLSKLLRISGAFKHPKYAGVVNDIAFLIENDDSFKKTKLFKLFFQNKSRSDGPTSYLRTLPAVRPSLNFLVMQYFFNTKNQINFDPVVVLNHFVAPGAAEPSTMGRANAQGRSLQKRIRSRIAFFVESLTSEKKCLAEAKNRLTHFIRLANDLRFAGTTKTTISLFPFFGATFFFLRDGVGVYNNLDAREQLLNQLRVKCWNLVGKDKIMELIEKLKNLGGIEELIKVIDMMIEIILRKRGIPYRYNSYFYEVKKMRSFLSNRTNTKTLIESVKIKSVYQSASLIAQDISFQLKNKRRSFHSIFAKIVKEIPKGVEGIRICFSGRLKDAAEKAQTKCYKHRKTSCNVFNHKIDYAPVEVFTRYGILGVKVWISYSQKKGRRAISETYEI.

Belongs to the universal ribosomal protein uS3 family. As to quaternary structure, component of the mitochondrial ribosome small subunit.

It localises to the mitochondrion. The protein is Small ribosomal subunit protein uS3m (RPS3) of Arabidopsis thaliana (Mouse-ear cress).